The following is a 967-amino-acid chain: Phosphoenolpyruvate carboxylase (967 aa).

Ser-10 carries the phosphoserine modification. Catalysis depends on residues His-171 and Lys-601. The disordered stretch occupies residues 915–936; the sequence is NASRLPLSRESPEATKPADELV. The segment covering 924-933 has biased composition (basic and acidic residues); sequence ESPEATKPAD.

This sequence belongs to the PEPCase type 1 family. Homotetramer. It depends on Mg(2+) as a cofactor.

It is found in the cytoplasm. It carries out the reaction oxaloacetate + phosphate = phosphoenolpyruvate + hydrogencarbonate. With respect to regulation, by light-reversible phosphorylation. Its function is as follows. Through the carboxylation of phosphoenolpyruvate (PEP) it forms oxaloacetate, a four-carbon dicarboxylic acid source for the tricarboxylic acid cycle. This is Phosphoenolpyruvate carboxylase from Pisum sativum (Garden pea).